Here is a 296-residue protein sequence, read N- to C-terminus: Bifunctional protein FolD 1/3 (296 aa).

Residues 166-168 (GRS), Ser191, and Ile232 contribute to the NADP(+) site.

This sequence belongs to the tetrahydrofolate dehydrogenase/cyclohydrolase family. Homodimer.

It carries out the reaction (6R)-5,10-methylene-5,6,7,8-tetrahydrofolate + NADP(+) = (6R)-5,10-methenyltetrahydrofolate + NADPH. The enzyme catalyses (6R)-5,10-methenyltetrahydrofolate + H2O = (6R)-10-formyltetrahydrofolate + H(+). The protein operates within one-carbon metabolism; tetrahydrofolate interconversion. Catalyzes the oxidation of 5,10-methylenetetrahydrofolate to 5,10-methenyltetrahydrofolate and then the hydrolysis of 5,10-methenyltetrahydrofolate to 10-formyltetrahydrofolate. This is Bifunctional protein FolD 1/3 from Ruegeria pomeroyi (strain ATCC 700808 / DSM 15171 / DSS-3) (Silicibacter pomeroyi).